The primary structure comprises 334 residues: Mevalonate kinase (334 aa).

110–120 (PVGAGLGSSAA) contributes to the ATP binding site. The active-site Proton acceptor is aspartate 161.

The protein belongs to the GHMP kinase family. Mevalonate kinase subfamily. As to quaternary structure, homodimer. Mg(2+) is required as a cofactor.

The protein localises to the cytoplasm. The catalysed reaction is (R)-mevalonate + ATP = (R)-5-phosphomevalonate + ADP + H(+). The protein operates within isoprenoid biosynthesis; isopentenyl diphosphate biosynthesis via mevalonate pathway; isopentenyl diphosphate from (R)-mevalonate: step 1/3. Catalyzes the phosphorylation of (R)-mevalonate (MVA) to (R)-mevalonate 5-phosphate (MVAP). Functions in the mevalonate (MVA) pathway leading to isopentenyl diphosphate (IPP), a key precursor for the biosynthesis of isoprenoid compounds such as archaeal membrane lipids. The protein is Mevalonate kinase of Thermococcus onnurineus (strain NA1).